The primary structure comprises 42 residues: Photosystem II reaction center protein J (42 aa).

A helical membrane pass occupies residues 10–30; the sequence is IPLWLVLTIIGLAAIALLALF.

Belongs to the PsbJ family. In terms of assembly, PSII is composed of 1 copy each of membrane proteins PsbA, PsbB, PsbC, PsbD, PsbE, PsbF, PsbH, PsbI, PsbJ, PsbK, PsbL, PsbM, PsbT, PsbY, PsbZ, Psb30/Ycf12, at least 3 peripheral proteins of the oxygen-evolving complex and a large number of cofactors. It forms dimeric complexes.

The protein localises to the plastid. Its subcellular location is the chloroplast thylakoid membrane. Its function is as follows. This protein is a component of the reaction center of photosystem II. In terms of biological role, one of the components of the core complex of photosystem II (PSII). PSII is a light-driven water:plastoquinone oxidoreductase that uses light energy to abstract electrons from H(2)O, generating O(2) and a proton gradient subsequently used for ATP formation. It consists of a core antenna complex that captures photons, and an electron transfer chain that converts photonic excitation into a charge separation. In Euglena gracilis, this protein is Photosystem II reaction center protein J.